The sequence spans 275 residues: Tumor necrosis factor-inducible gene 6 protein (275 aa).

Residues 1-17 form the signal peptide; sequence MVVLLCLCVLLWEEAHG. The 94-residue stretch at 36-129 folds into the Link domain; sequence GVYHREARAG…SERWDAYCYN (94 aa). Disulfide bonds link cysteine 58-cysteine 127, cysteine 82-cysteine 103, and cysteine 135-cysteine 161. N-linked (GlcNAc...) asparagine glycosylation is present at asparagine 118. Residues 135–247 form the CUB domain; the sequence is CGGVFTDPKR…GGFQIKYVTV (113 aa). Positions 183, 191, 232, 234, and 235 each coordinate Ca(2+). Cysteine 188 and cysteine 210 form a disulfide bridge. Polar residues predominate over residues 253 to 264; it reads SSQAKNTSTTGN. Positions 253 to 275 are disordered; sequence SSQAKNTSTTGNKKFLPGRFSHL. A glycan (N-linked (GlcNAc...) asparagine) is linked at asparagine 258.

In terms of assembly, interacts (via Link domain) with inter-alpha-inhibitor (I-alpha-I) component bikunin. Interacts with ITIH2/HC2; this interaction is required for transesterification of the HC to hyaluronan. Interacts (via Link and CUB domains) with ITIH1. Chondroitin sulfate may be required for the stability of the complex. Interacts (via Link domain) with various C-X-C and C-C chemokines including PF4, CXCL8, CXCL11, CXCL12, CCL2, CCL7, CCL19, CCL21, and CCL27; this interaction interferes with chemokine binding to glycosaminoglycans. Interacts (primarily via Link domain) with BMP2; this interaction is inhibited by hyaluronan. Interacts (via both Link and CUB domains) with TNFSF11. Interacts (via CUB domain) with FN1 (via type III repeats 9-14); this interaction enhances fibronectin fibril assembly. TNFAIP6 may act as a bridging molecule between FN1 and THBS1. Expressed in epiphyseal and metaphyseal bone marrow of both the femur and tibia (at protein level).

It localises to the secreted. Functionally, major regulator of extracellular matrix organization during tissue remodeling. Catalyzes the transfer of a heavy chain (HC) from inter-alpha-inhibitor (I-alpha-I) complex to hyaluronan. Cleaves the ester bond between the C-terminus of the HC and GalNAc residue of the chondroitin sulfate chain in I-alpha-I complex followed by transesterification of the HC to hyaluronan. In the process, potentiates the antiprotease function of I-alpha-I complex through release of free bikunin. Acts as a catalyst in the formation of hyaluronan-HC oligomers and hyaluronan-rich matrix surrounding the cumulus cell-oocyte complex, a necessary step for oocyte fertilization. Assembles hyaluronan in pericellular matrices that serve as platforms for receptor clustering and signaling. Enables binding of hyaluronan deposited on the surface of macrophages to LYVE1 on lymphatic endothelium and facilitates macrophage extravasation. Alters hyaluronan binding to functionally latent CD44 on vascular endothelium, switching CD44 into an active state that supports leukocyte rolling. Modulates the interaction of chemokines with extracellular matrix components and proteoglycans on endothelial cell surface, likely preventing chemokine gradient formation. In a negative feedback mechanism, may limit excessive neutrophil recruitment at inflammatory sites by antagonizing the association of CXCL8 with glycosaminoglycans on vascular endothelium. Has a role in osteogenesis and bone remodeling. Inhibits BMP2-dependent differentiation of mesenchymal stem cell to osteoblasts. Protects against bone erosion during inflammation by inhibiting TNFSF11/RANKL-dependent osteoclast activation. This Mus musculus (Mouse) protein is Tumor necrosis factor-inducible gene 6 protein (Tnfaip6).